The primary structure comprises 753 residues: Photosystem I P700 chlorophyll a apoprotein A1 (753 aa).

8 consecutive transmembrane segments (helical) span residues 73-96 (IFSA…YHGA), 159-182 (LYCT…FHYH), 198-222 (LNHH…HVSL), 294-312 (TAHH…GHMY), 349-372 (WHAQ…HHMY), 388-414 (LSLF…IFMV), 436-458 (AIVS…LYIH), and 534-552 (FLVH…LILL). C576 and C585 together coordinate [4Fe-4S] cluster. Helical transmembrane passes span 592–613 (HVFL…HFSW) and 667–689 (LSAY…MFLF). A chlorophyll a'-binding site is contributed by H678. Chlorophyll a-binding residues include M686 and Y694. W695 serves as a coordination point for phylloquinone. Residues 727–747 (AVGVAHYLLGGIVTTWAFFLA) traverse the membrane as a helical segment.

Belongs to the PsaA/PsaB family. As to quaternary structure, the PsaA/B heterodimer binds the P700 chlorophyll special pair and subsequent electron acceptors. PSI consists of a core antenna complex that captures photons, and an electron transfer chain that converts photonic excitation into a charge separation. The eukaryotic PSI reaction center is composed of at least 11 subunits. Requires P700 is a chlorophyll a/chlorophyll a' dimer, A0 is one or more chlorophyll a, A1 is one or both phylloquinones and FX is a shared 4Fe-4S iron-sulfur center. as cofactor.

The protein localises to the plastid. It is found in the chloroplast thylakoid membrane. The enzyme catalyses reduced [plastocyanin] + hnu + oxidized [2Fe-2S]-[ferredoxin] = oxidized [plastocyanin] + reduced [2Fe-2S]-[ferredoxin]. Its function is as follows. PsaA and PsaB bind P700, the primary electron donor of photosystem I (PSI), as well as the electron acceptors A0, A1 and FX. PSI is a plastocyanin-ferredoxin oxidoreductase, converting photonic excitation into a charge separation, which transfers an electron from the donor P700 chlorophyll pair to the spectroscopically characterized acceptors A0, A1, FX, FA and FB in turn. Oxidized P700 is reduced on the lumenal side of the thylakoid membrane by plastocyanin. In Pinus thunbergii (Japanese black pine), this protein is Photosystem I P700 chlorophyll a apoprotein A1.